The following is a 327-amino-acid chain: Nuclear apoptosis-inducing factor 1 (327 aa).

Positions 1 to 70 are required for nuclear localization and apoptosis-inducing activity; the sequence is MAVPAKKRKM…CRRELPEVKK (70 aa). Positions 88 to 98 are enriched in low complexity; it reads AAVEGGEAPGP. Disordered regions lie at residues 88-118 and 303-327; these read AAVEGGEAPGPTEEDGAGGPGTGGGSGAGGP and NMPNPATASEPGQVAQNGQPDSIIQ. Over residues 104–117 the composition is skewed to gly residues; it reads AGGPGTGGGSGAGG. Positions 316 to 327 are enriched in polar residues; sequence VAQNGQPDSIIQ.

The protein belongs to the NAIF1 family. Interacts with HARBI1.

The protein resides in the nucleus. Induces apoptosis. This is Nuclear apoptosis-inducing factor 1 (NAIF1) from Bos taurus (Bovine).